Reading from the N-terminus, the 2025-residue chain is E3 ubiquitin-protein ligase TRIP12 (2025 aa).

The segment covering 1-10 has biased composition (polar residues); the sequence is MSNRPNNNPG. A disordered region spans residues 1–404; that stretch reads MSNRPNNNPG…SGESESDDSE (404 aa). Serine 2 is subject to N-acetylserine. Serine 12 carries the post-translational modification Phosphoserine. The segment covering 18–27 has biased composition (polar residues); it reads RNTAGAQPQD. Residues 48-70 show a composition bias toward basic and acidic residues; it reads DPDRANTSERQKTGQVPKKDNSR. Residues serine 77, serine 85, and serine 100 each carry the phosphoserine modification. Residues 78 to 88 show a composition bias toward polar residues; that stretch reads PDYNRTNSPSS. A compositionally biased stretch (polar residues) spans 119–132; it reads EQQLKSAQLPSTSK. 2 stretches are compositionally biased toward low complexity: residues 154 to 166 and 177 to 215; these read SSCV…SEST and KLAS…ASST. Lysine 181 is modified (N6-acetyllysine). Residues 280 to 290 are compositionally biased toward polar residues; sequence PGSSKSETSKP. Serine 310 and serine 312 each carry phosphoserine. Residues 326–338 show a composition bias toward polar residues; that stretch reads QKTTGSCASTSRR. Over residues 346 to 358 the composition is skewed to basic and acidic residues; it reads GAAEARRQEKMAD. Over residues 360–371 the composition is skewed to polar residues; that stretch reads ESNQETVNSSAA. Positions 379–397 are enriched in low complexity; that stretch reads GAAASSSVAGAVGMTTSGE. A WWE domain is found at 755 to 869; the sequence is MLKKGNAQNT…DPELAKSFIK (115 aa). Positions 970 to 1077 are disordered; the sequence is ESLLTSPPKA…QSPKSSFLAS (108 aa). At serine 975 the chain carries Phosphoserine. Positions 983–1006 are enriched in low complexity; sequence GSGSLGSTTPASSGTATAATNASA. Serine 1024 and serine 1030 each carry phosphoserine. Positions 1034 to 1047 are enriched in basic residues; that stretch reads KRKRLPKRGPRRPK. Serine 1049 is subject to Phosphoserine. Residues 1050-1059 show a composition bias toward basic and acidic residues; it reads PPRDDDKVDN. Residues 1062–1073 show a composition bias toward low complexity; the sequence is KSPTTTQSPKSS. Phosphoserine occurs at positions 1063, 1350, 1355, 1362, and 1409. Position 1410 is a phosphothreonine (threonine 1410). Disordered regions lie at residues 1441–1466 and 1601–1620; these read TKDC…NAKK and TNPE…PRLD. Position 1458 is an N6-acetyllysine (lysine 1458). Residue serine 1460 is modified to Phosphoserine. The K-box stretch occupies residues 1529 to 1603; it reads EIIPTSEFIN…AMQRLLDTNP (75 aa). In terms of domain architecture, HECT spans 1918-2025; it reads PDHGYTHDSR…REGQQSFHLS (108 aa). Cysteine 1992 functions as the Glycyl thioester intermediate in the catalytic mechanism.

The protein belongs to the UPL family. K-HECT subfamily. Interacts with MYC; leading to disrupt interaction with isoform p19ARF/ARF of CDKN2A. Interacts with TRADD; leading to disrupt interaction with isoform p19ARF/ARF of CDKN2A. Interacts with SMARCC1; leading to disrupt interaction with SMARCE1.

The protein resides in the nucleus. Its subcellular location is the nucleoplasm. The catalysed reaction is S-ubiquitinyl-[E2 ubiquitin-conjugating enzyme]-L-cysteine + [acceptor protein]-L-lysine = [E2 ubiquitin-conjugating enzyme]-L-cysteine + N(6)-ubiquitinyl-[acceptor protein]-L-lysine.. It participates in protein modification; protein ubiquitination. Its function is as follows. E3 ubiquitin-protein ligase involved in ubiquitin fusion degradation (UFD) pathway and regulation of DNA repair. Part of the ubiquitin fusion degradation (UFD) pathway, a process that mediates ubiquitination of protein at their N-terminus, regardless of the presence of lysine residues in target proteins. Acts as a key regulator of DNA damage response by acting as a suppressor of RNF168, an E3 ubiquitin-protein ligase that promotes accumulation of 'Lys-63'-linked histone H2A and H2AX at DNA damage sites, thereby acting as a guard against excessive spreading of ubiquitinated chromatin at damaged chromosomes. In normal cells, mediates ubiquitination and degradation of isoform p19ARF/ARF of CDKN2A, a lysine-less tumor suppressor required for p53/TP53 activation under oncogenic stress. In cancer cells, however, isoform p19ARF/ARF and TRIP12 are located in different cell compartments, preventing isoform p19ARF/ARF ubiquitination and degradation. Does not mediate ubiquitination of isoform p16-INK4a of CDKN2A. Also catalyzes ubiquitination of NAE1 and SMARCE1, leading to their degradation. Ubiquitination and degradation of target proteins is regulated by interaction with proteins such as MYC, TRADD or SMARCC1, which disrupt the interaction between TRIP12 and target proteins. Mediates ubiquitination of ASXL1: following binding to N(6)-methyladenosine methylated DNA, ASXL1 is ubiquitinated by TRIP12, leading to its degradation and subsequent inactivation of the PR-DUB complex. The chain is E3 ubiquitin-protein ligase TRIP12 (Trip12) from Mus musculus (Mouse).